Consider the following 1024-residue polypeptide: Error-prone DNA polymerase (1024 aa).

Belongs to the DNA polymerase type-C family. DnaE2 subfamily.

It is found in the cytoplasm. The enzyme catalyses DNA(n) + a 2'-deoxyribonucleoside 5'-triphosphate = DNA(n+1) + diphosphate. Its function is as follows. DNA polymerase involved in damage-induced mutagenesis and translesion synthesis (TLS). It is not the major replicative DNA polymerase. This is Error-prone DNA polymerase from Vibrio vulnificus (strain YJ016).